The sequence spans 213 residues: uncharacterized protein (213 aa).

The first 19 residues, 1–19 (MKKVLLLLFVLTIGLALSA), serve as a signal peptide directing secretion. Cys-20 carries N-palmitoyl cysteine lipidation. Cys-20 carries S-diacylglycerol cysteine lipidation. The segment at 20 to 62 (CSQSSDASEKEKPKEKKSQEELEKELDKELKKGGEPKTKKDDQ) is disordered. Positions 26–62 (ASEKEKPKEKKSQEELEKELDKELKKGGEPKTKKDDQ) are enriched in basic and acidic residues.

The protein localises to the cell membrane. This is an uncharacterized protein from Bacillus subtilis (strain 168).